The primary structure comprises 704 residues: Glycine--tRNA ligase beta subunit (704 aa).

This sequence belongs to the class-II aminoacyl-tRNA synthetase family. Tetramer of two alpha and two beta subunits.

The protein localises to the cytoplasm. It catalyses the reaction tRNA(Gly) + glycine + ATP = glycyl-tRNA(Gly) + AMP + diphosphate. This chain is Glycine--tRNA ligase beta subunit, found in Delftia acidovorans (strain DSM 14801 / SPH-1).